The following is a 594-amino-acid chain: DNA ligase 2 (594 aa).

Residue Glu-250 participates in ATP binding. Residue Lys-252 is the N6-AMP-lysine intermediate of the active site. Arg-257, Arg-273, Glu-303, Phe-343, Arg-419, and Lys-425 together coordinate ATP.

This sequence belongs to the ATP-dependent DNA ligase family. Mg(2+) is required as a cofactor.

The enzyme catalyses ATP + (deoxyribonucleotide)n-3'-hydroxyl + 5'-phospho-(deoxyribonucleotide)m = (deoxyribonucleotide)n+m + AMP + diphosphate.. DNA ligase that seals nicks in double-stranded DNA during DNA replication, DNA recombination and DNA repair. This chain is DNA ligase 2, found in Korarchaeum cryptofilum (strain OPF8).